The following is a 293-amino-acid chain: Triosephosphate isomerase (293 aa).

Residue 25 to 27 (NWK) coordinates substrate. The Electrophile role is filled by histidine 117. The active-site Proton acceptor is the glutamate 218.

This sequence belongs to the triosephosphate isomerase family. In terms of assembly, homodimer.

The protein resides in the cytoplasm. The enzyme catalyses D-glyceraldehyde 3-phosphate = dihydroxyacetone phosphate. It participates in carbohydrate biosynthesis; gluconeogenesis. Its pathway is carbohydrate degradation; glycolysis; D-glyceraldehyde 3-phosphate from glycerone phosphate: step 1/1. Involved in the gluconeogenesis. Catalyzes stereospecifically the conversion of dihydroxyacetone phosphate (DHAP) to D-glyceraldehyde-3-phosphate (G3P). The chain is Triosephosphate isomerase from Tropheryma whipplei (strain Twist) (Whipple's bacillus).